Here is a 107-residue protein sequence, read N- to C-terminus: Cytochrome c oxidase assembly protein COX16 homolog, mitochondrial (107 aa).

Residues 1–14 lie on the Mitochondrial matrix side of the membrane; that stretch reads MFGYAVRRALRKSK. A helical transmembrane segment spans residues 15–37; it reads TLRYGVPMLLLIVGGSFGLREFS. Residues 38–107 are Mitochondrial intermembrane-facing; it reads QIRYDAVKIK…PEILKTNKTT (70 aa). Residues 80-107 form a disordered region; it reads NIRGPRPWEDPDLLQGRNPEILKTNKTT.

Belongs to the COX16 family. As to quaternary structure, associates with the MITRAC complex. Interacts with MT-CO2/COX; specifically interacts with newly synthesized MT-CO2/COX. Interacts with SCO1, SCO2 and COA6.

It is found in the mitochondrion inner membrane. Its function is as follows. Required for the assembly of the mitochondrial respiratory chain complex IV (CIV), also known as cytochrome c oxidase. Promotes the insertion of copper into the active site of cytochrome c oxidase subunit II (MT-CO2/COX2). Interacts specifically with newly synthesized MT-CO2/COX and its copper center-forming metallochaperones SCO1, SCO2 and COA6. Probably facilitates MT-CO2/COX2 association with the MITRAC assembly intermediate containing MT-CO1/COX1, thereby participating in merging the MT-CO1/COX1 and MT-CO2/COX2 assembly lines. The sequence is that of Cytochrome c oxidase assembly protein COX16 homolog, mitochondrial from Bos taurus (Bovine).